The following is a 201-amino-acid chain: Female-specific protein transformer (201 aa).

Positions 1 to 117 (MDADSSSRSP…RSRSRSRTPR (117 aa)) are disordered. Residues 9–37 (SPRDTRTCARPKEKVPYFADEGRERDRVR) show a composition bias toward basic and acidic residues. Basic residues-rich tracts occupy residues 38 to 62 (NLRH…RARS) and 99 to 115 (KQRR…RSRT).

Its subcellular location is the nucleus speckle. Its function is as follows. Member of the regulatory pathway controlling female somatic sexual differentiation, regulated by Sxl. Activates dsx female-specific splicing by promoting the formation of a splicing enhancer complex which consists of tra, tra2 and sr proteins. This is Female-specific protein transformer (tra) from Drosophila hydei (Fruit fly).